The sequence spans 375 residues: Growth/differentiation factor 8 (375 aa).

Residues 1 to 18 (MQKLQISVYIYLFMLIVA) form the signal peptide. Residues 19–266 (GPVDLNENSE…VTDTPKRSRR (248 aa)) constitute a propeptide that is removed on maturation. N-linked (GlcNAc...) asparagine glycosylation is found at N47 and N71. Cystine bridges form between C272/C282, C281/C340, C309/C372, and C313/C374.

The protein belongs to the TGF-beta family. In terms of assembly, homodimer; disulfide-linked. Interacts with WFIKKN2, leading to inhibit its activity. Interacts with FSTL3. Post-translationally, synthesized as large precursor molecule that undergoes proteolytic cleavage to generate an N-terminal propeptide and a disulfide linked C-terminal dimer, which is the biologically active molecule. The circulating form consists of a latent complex of the C-terminal dimer and other proteins, including its propeptide, which maintain the C-terminal dimer in a latent, inactive state. Ligand activation requires additional cleavage of the prodomain by a tolloid-like metalloproteinase.

The protein resides in the secreted. Functionally, acts specifically as a negative regulator of skeletal muscle growth. The chain is Growth/differentiation factor 8 (MSTN) from Bos gaurus (Seladang).